The following is a 762-amino-acid chain: Phosphoribosylformylglycinamidine synthase subunit PurL (762 aa).

H58 is an active-site residue. Residues Y61 and R105 each coordinate ATP. E107 is a binding site for Mg(2+). Substrate is bound by residues 108-111 and R130; that span reads SHNH. H109 functions as the Proton acceptor in the catalytic mechanism. D131 provides a ligand contact to Mg(2+). Q255 is a binding site for substrate. Position 283 (D283) interacts with Mg(2+). 327–329 serves as a coordination point for substrate; sequence ESQ. ATP contacts are provided by N513 and G550. N551 is a Mg(2+) binding site. S553 serves as a coordination point for substrate.

This sequence belongs to the FGAMS family. As to quaternary structure, monomer. Part of the FGAM synthase complex composed of 1 PurL, 1 PurQ and 2 PurS subunits.

It is found in the cytoplasm. It catalyses the reaction N(2)-formyl-N(1)-(5-phospho-beta-D-ribosyl)glycinamide + L-glutamine + ATP + H2O = 2-formamido-N(1)-(5-O-phospho-beta-D-ribosyl)acetamidine + L-glutamate + ADP + phosphate + H(+). It participates in purine metabolism; IMP biosynthesis via de novo pathway; 5-amino-1-(5-phospho-D-ribosyl)imidazole from N(2)-formyl-N(1)-(5-phospho-D-ribosyl)glycinamide: step 1/2. Part of the phosphoribosylformylglycinamidine synthase complex involved in the purines biosynthetic pathway. Catalyzes the ATP-dependent conversion of formylglycinamide ribonucleotide (FGAR) and glutamine to yield formylglycinamidine ribonucleotide (FGAM) and glutamate. The FGAM synthase complex is composed of three subunits. PurQ produces an ammonia molecule by converting glutamine to glutamate. PurL transfers the ammonia molecule to FGAR to form FGAM in an ATP-dependent manner. PurS interacts with PurQ and PurL and is thought to assist in the transfer of the ammonia molecule from PurQ to PurL. The sequence is that of Phosphoribosylformylglycinamidine synthase subunit PurL from Corynebacterium glutamicum (strain R).